An 803-amino-acid chain; its full sequence is Integrin beta-1 (803 aa).

The first 24 residues, 1 to 24 (MAETNLTLLTWAGILCCLIWSGSA), serve as a signal peptide directing secretion. Residue Gln25 is modified to Blocked amino end (Gln). Topologically, residues 25-733 (QQGGSDCIKA…ETPECPSGPD (709 aa)) are extracellular. The region spanning 30–80 (DCIKANAKSCGECIQAGPNCGWCKKTDFLQEGEPTSARCDDLAALKSKGCP) is the PSI domain. 22 cysteine pairs are disulfide-bonded: Cys31–Cys49, Cys39–Cys469, Cys42–Cys68, Cys52–Cys79, Cys211–Cys217, Cys265–Cys305, Cys405–Cys419, Cys439–Cys467, Cys471–Cys491, Cys482–Cys494, Cys496–Cys505, Cys507–Cys538, Cys521–Cys536, Cys530–Cys541, Cys543–Cys558, Cys560–Cys581, Cys565–Cys579, Cys573–Cys584, Cys586–Cys595, Cys597–Cys620, Cys604–Cys618, and Cys612–Cys623. The 239-residue stretch at 144 to 382 (DYPIDLYYLM…QLIIDAYNSL (239 aa)) folds into the VWFA domain. The Mg(2+) site is built by Ser156 and Ser158. 4 residues coordinate Ca(2+): Ser158, Asp161, Asp162, and Glu193. The segment at 211 to 217 (CTGDQNC) is CX3CL1-binding. N-linked (GlcNAc...) asparagine glycosylation occurs at Asn216. Ca(2+) contacts are provided by Asn248, Asp250, Pro252, and Glu253. Glu253 lines the Mg(2+) pocket. Residue Asn273 is glycosylated (N-linked (GlcNAc...) asparagine). The interval 299–318 (LPNDGKCHLENNMYTMSHYY) is CX3CL1-binding. 6 N-linked (GlcNAc...) asparagine glycosylation sites follow: Asn367, Asn410, Asn421, Asn433, Asn445, and Asn486. An interaction with TMEM182 region spans residues 387 to 470 (ILENSKLPKE…IHLQFICDCL (84 aa)). 4 I-EGF domains span residues 471–506 (CQSE…RLCE), 507–559 (CSTD…KYCE), 560–596 (CDNF…SACD), and 597–636 (CSLD…PTCE). N-linked (GlcNAc...) asparagine glycosylation is present at Asn525. Residue Asn589 is glycosylated (N-linked (GlcNAc...) asparagine). Asn624 is a glycosylation site (N-linked (GlcNAc...) asparagine). 6 cysteine pairs are disulfide-bonded: Cys625–Cys635, Cys638–Cys641, Cys645–Cys696, Cys651–Cys670, Cys654–Cys666, and Cys704–Cys728. Asn674 is a glycosylation site (N-linked (GlcNAc...) asparagine). The chain crosses the membrane as a helical span at residues 734–756 (IIPIVAGVVAGIVLIGLALLLIW). At 757–803 (KLLMIIHDRREFAKFEKEKMNAKWDTGENPIYKSAVTTVVNPKYEGK) the chain is on the cytoplasmic side. Position 788 is a phosphotyrosine; by Tyr-kinases (Tyr788).

This sequence belongs to the integrin beta chain family. In terms of assembly, heterodimer of an alpha and a beta subunit. Beta-1 associates with either alpha-1, alpha-2, alpha-3, alpha-4, alpha-5, alpha-6, alpha-7, alpha-8, alpha-9, alpha-10, alpha-11 or alpha-V. Interacts with TMEM182 and LAMB1. As to expression, expressed on surface of embryonic fibroblasts (at protein level).

Its subcellular location is the cell membrane. It localises to the cell projection. The protein resides in the invadopodium membrane. The protein localises to the ruffle membrane. It is found in the melanosome. Its subcellular location is the lamellipodium. It localises to the ruffle. The protein resides in the cell junction. The protein localises to the focal adhesion. Functionally, integrins alpha-1/beta-1, alpha-2/beta-1, alpha-10/beta-1 and alpha-11/beta-1 are receptors for collagen. Integrins alpha-1/beta-1 and alpha-2/beta-1 recognize the proline-hydroxylated sequence G-F-P-G-E-R in collagen. Integrins alpha-2/beta-1, alpha-3/beta-1, alpha-4/beta-1, alpha-5/beta-1, alpha-8/beta-1, alpha-10/beta-1, alpha-11/beta-1 and alpha-V/beta-1 are receptors for fibronectin. Alpha-4/beta-1 recognizes one or more domains within the alternatively spliced CS-1 and CS-5 regions of fibronectin. Integrin alpha-5/beta-1 is a receptor for fibrinogen. Integrin alpha-1/beta-1, alpha-2/beta-1, alpha-6/beta-1 and alpha-7/beta-1 are receptors for lamimin. Integrin alpha-6/beta-1 (ITGA6:ITGB1) is present in oocytes and is involved in sperm-egg fusion. Integrin alpha-4/beta-1 is a receptor for VCAM1 and recognizes the sequence Q-I-D-S in VCAM1. Integrin alpha-9/beta-1 is a receptor for VCAM1, cytotactin and osteopontin. It recognizes the sequence A-E-I-D-G-I-E-L in cytotactin. Integrin alpha-3/beta-1 is a receptor for epiligrin, thrombospondin and CSPG4. Integrin alpha-3/beta-1 provides a docking site for FAP (seprase) at invadopodia plasma membranes in a collagen-dependent manner and hence may participate in the adhesion, formation of invadopodia and matrix degradation processes, promoting cell invasion. Alpha-3/beta-1 may mediate with LGALS3 the stimulation by CSPG4 of endothelial cells migration. Integrin alpha-V/beta-1 is a receptor for vitronectin. Beta-1 integrins recognize the sequence R-G-D in a wide array of ligands. When associated with alpha-7/beta-1 integrin, regulates cell adhesion and laminin matrix deposition. Involved in promoting endothelial cell motility and angiogenesis. Involved in osteoblast compaction through the fibronectin fibrillogenesis cell-mediated matrix assembly process and the formation of mineralized bone nodules. May be involved in up-regulation of the activity of kinases such as PKC via binding to KRT1. Together with KRT1 and RACK1, serves as a platform for SRC activation or inactivation. ITGA4:ITGB1 binds to fractalkine (CX3CL1) and may act as its coreceptor in CX3CR1-dependent fractalkine signaling. ITGA4:ITGB1 and ITGA5:ITGB1 bind to PLA2G2A via a site (site 2) which is distinct from the classical ligand-binding site (site 1) and this induces integrin conformational changes and enhanced ligand binding to site 1. ITGA5:ITGB1 acts as a receptor for fibrillin-1 (FBN1) and mediates R-G-D-dependent cell adhesion to FBN1. ITGA5:ITGB1 acts as a receptor for fibronectin FN1 and mediates R-G-D-dependent cell adhesion to FN1. ITGA5:ITGB1 is a receptor for IL1B and binding is essential for IL1B signaling. ITGA5:ITGB3 is a receptor for soluble CD40LG and is required for CD40/CD40LG signaling. Plays an important role in myoblast differentiation and fusion during skeletal myogenesis. This is Integrin beta-1 (ITGB1) from Gallus gallus (Chicken).